Here is a 396-residue protein sequence, read N- to C-terminus: Putative arsenical pump-driving ATPase 1 (396 aa).

8–15 is a binding site for ATP; it reads GKGGVGKT.

The protein belongs to the arsA ATPase family.

The catalysed reaction is arsenite(in) + ATP + H2O = arsenite(out) + ADP + phosphate + H(+). In terms of biological role, anion-transporting ATPase. Catalyzes the extrusion of arsenite. The sequence is that of Putative arsenical pump-driving ATPase 1 (arsA1) from Aquifex aeolicus (strain VF5).